Here is a 276-residue protein sequence, read N- to C-terminus: ATP synthase subunit a (276 aa).

6 helical membrane passes run 47–67 (WHIDSLLFSVGLGVLFLWLFY), 107–127 (IAPLGLTIFVWVFLMNLMDLI), 152–172 (DLNVTLGLALSVFVLIVFYSI), 188–208 (PFNHWALIPINFVLETVTLIA), 226–246 (LIFILIALMPWWAQFALSVPW), and 247–267 (AIFHILVIVLQAFIFMMLTIV).

Belongs to the ATPase A chain family. F-type ATPases have 2 components, CF(1) - the catalytic core - and CF(0) - the membrane proton channel. CF(1) has five subunits: alpha(3), beta(3), gamma(1), delta(1), epsilon(1). CF(0) has three main subunits: a(1), b(2) and c(9-12). The alpha and beta chains form an alternating ring which encloses part of the gamma chain. CF(1) is attached to CF(0) by a central stalk formed by the gamma and epsilon chains, while a peripheral stalk is formed by the delta and b chains.

It localises to the cell inner membrane. In terms of biological role, key component of the proton channel; it plays a direct role in the translocation of protons across the membrane. The chain is ATP synthase subunit a from Shewanella halifaxensis (strain HAW-EB4).